An 880-amino-acid chain; its full sequence is Alanine--tRNA ligase (880 aa).

Zn(2+) is bound by residues His-566, His-570, Cys-668, and His-672.

It belongs to the class-II aminoacyl-tRNA synthetase family. Zn(2+) serves as cofactor.

Its subcellular location is the cytoplasm. The catalysed reaction is tRNA(Ala) + L-alanine + ATP = L-alanyl-tRNA(Ala) + AMP + diphosphate. Functionally, catalyzes the attachment of alanine to tRNA(Ala) in a two-step reaction: alanine is first activated by ATP to form Ala-AMP and then transferred to the acceptor end of tRNA(Ala). Also edits incorrectly charged Ser-tRNA(Ala) and Gly-tRNA(Ala) via its editing domain. The protein is Alanine--tRNA ligase of Parafrankia sp. (strain EAN1pec).